The following is a 69-amino-acid chain: uncharacterized protein (69 aa).

A helical membrane pass occupies residues 32 to 54 (MLGAIDVAVAVASVPTLFVVTAI).

Its subcellular location is the membrane. This is an uncharacterized protein from Sinorhizobium fredii (strain NBRC 101917 / NGR234).